Reading from the N-terminus, the 673-residue chain is Flotillin family inner membrane protein sll1021 (673 aa).

The chain crosses the membrane as a helical span at residues 60–80 (LLFFPVVIIAVIFLILVTIFL). The interval 639–673 (LQDPPSVSPPSAAVSEDDWPDLAPPTETNFSPEEI) is disordered. The segment covering 664-673 (TETNFSPEEI) has biased composition (polar residues).

It belongs to the band 7/mec-2 family. Flotillin subfamily. As to quaternary structure, homooligomerizes.

It is found in the cell inner membrane. The protein localises to the membrane raft. Found in functional membrane microdomains (FMM) that may be equivalent to eukaryotic membrane rafts. FMMs are highly dynamic and increase in number as cells age. Flotillins are thought to be important factors in membrane fluidity. In Synechocystis sp. (strain ATCC 27184 / PCC 6803 / Kazusa), this protein is Flotillin family inner membrane protein sll1021.